Reading from the N-terminus, the 208-residue chain is Uridine kinase (208 aa).

Residue 12-19 (GGSGGGKT) coordinates ATP.

It belongs to the uridine kinase family.

It localises to the cytoplasm. The catalysed reaction is uridine + ATP = UMP + ADP + H(+). It carries out the reaction cytidine + ATP = CMP + ADP + H(+). It functions in the pathway pyrimidine metabolism; CTP biosynthesis via salvage pathway; CTP from cytidine: step 1/3. Its pathway is pyrimidine metabolism; UMP biosynthesis via salvage pathway; UMP from uridine: step 1/1. In Streptococcus equi subsp. equi (strain 4047), this protein is Uridine kinase.